Consider the following 757-residue polypeptide: Serine/threonine-protein phosphatase 2A 56 kDa regulatory subunit delta isoform (757 aa).

Over residues 1-11 (MMRGFKQRLIK) the composition is skewed to basic residues. Disordered regions lie at residues 1–172 (MMRG…EDHA) and 188–250 (ISNA…NPDT). Positions 12-21 (KTTGSSSSSS) are enriched in low complexity. Over residues 23 to 34 (KKKDKEKEKEKS) the composition is skewed to basic and acidic residues. Low complexity-rich tracts occupy residues 35–66 (STTS…GSKS), 86–119 (SSTS…STKK), and 128–147 (QSKQ…SSSS). A compositionally biased stretch (basic and acidic residues) spans 160–172 (TKDDKSTSGEDHA). Positions 197 to 216 (SSDVENGNSNNNNMNINTSN) are enriched in low complexity. Residues 217 to 228 (TQDANHASSQSI) are compositionally biased toward polar residues. Phosphothreonine is present on residues threonine 242 and threonine 257. The tract at residues 734-757 (SFNTASENNTLNEENENDCDSEIQ) is disordered. Residues 746-757 (EENENDCDSEIQ) show a composition bias toward acidic residues.

It belongs to the phosphatase 2A regulatory subunit B family. PP2A consists of a common heterodimeric core enzyme, composed of a 36 kDa catalytic subunit (subunit C) and a 65 kDa constant regulatory subunit (PR65 or subunit A), that associates with a variety of regulatory subunits. Proteins that associate with the core dimer include three families of regulatory subunits B (the R2/B/PR55/B55, R3/B''/PR72/PR130/PR59 and R5/B'/B56 families), the 48 kDa variable regulatory subunit, viral proteins, and cell signaling molecules.

It localises to the cytoplasm. Its subcellular location is the nucleus. Its function is as follows. The B regulatory subunit might modulate substrate selectivity and catalytic activity, and might also direct the localization of the catalytic enzyme to a particular subcellular compartment. In terms of biological role, multicopy suppressor of ROX3 and HSP60. The sequence is that of Serine/threonine-protein phosphatase 2A 56 kDa regulatory subunit delta isoform (RTS1) from Saccharomyces cerevisiae (strain ATCC 204508 / S288c) (Baker's yeast).